Consider the following 230-residue polypeptide: MKKKKIILMRHGESKWNKLNKFTGWQDIGLTKNGKKEAKLAAKLIKKNNFIFDIAYTSILKRAIYTLWIILKKTNQIWIPVYKSWKLNERNYGALEGLNKEKIKKKYGDEQVQLWRRSFTVCPPNLNISNKYHPIYDIKYKKLKKHELPTSESLEMTFNRVIPFWEFKILPQLEKNKNILIVAHGNSLRALIKYLGNISDSDIIDLDISTGKPLVYEFSNTNKPLKYYYL.

Residues 10-17 (RHGESKWN), 23-24 (TG), Arg-62, 89-92 (ERNY), Lys-100, 116-117 (RR), and 185-186 (GN) each bind substrate. The active-site Tele-phosphohistidine intermediate is the His-11. The active-site Proton donor/acceptor is Glu-89.

This sequence belongs to the phosphoglycerate mutase family. BPG-dependent PGAM subfamily. As to quaternary structure, homodimer.

The enzyme catalyses (2R)-2-phosphoglycerate = (2R)-3-phosphoglycerate. The protein operates within carbohydrate degradation; glycolysis; pyruvate from D-glyceraldehyde 3-phosphate: step 3/5. Catalyzes the interconversion of 2-phosphoglycerate and 3-phosphoglycerate. The protein is 2,3-bisphosphoglycerate-dependent phosphoglycerate mutase of Buchnera aphidicola subsp. Cinara cedri (strain Cc).